A 428-amino-acid polypeptide reads, in one-letter code: Divergent protein kinase domain 1A (428 aa).

The Cytoplasmic portion of the chain corresponds to 1–27 (MARSLCAGAWLRKPHYLQARLSYMRVK). A helical membrane pass occupies residues 28-48 (YLFFSWLVVFVGSWIIYVQYS). Residues 49-428 (TYTELCRGKD…WKKISYTNDS (380 aa)) are Lumenal-facing.

This sequence belongs to the DIPK family. Among the many cysteines in the lumenal domain, most are probably involved in disulfide bonds. Ubiquitous.

It is found in the endoplasmic reticulum membrane. The sequence is that of Divergent protein kinase domain 1A (Dipk1a) from Mus musculus (Mouse).